The chain runs to 210 residues: ATP-dependent Clp protease proteolytic subunit (210 aa).

Serine 106 (nucleophile) is an active-site residue. Histidine 131 is an active-site residue.

This sequence belongs to the peptidase S14 family. Fourteen ClpP subunits assemble into 2 heptameric rings which stack back to back to give a disk-like structure with a central cavity, resembling the structure of eukaryotic proteasomes.

Its subcellular location is the cytoplasm. It carries out the reaction Hydrolysis of proteins to small peptides in the presence of ATP and magnesium. alpha-casein is the usual test substrate. In the absence of ATP, only oligopeptides shorter than five residues are hydrolyzed (such as succinyl-Leu-Tyr-|-NHMec, and Leu-Tyr-Leu-|-Tyr-Trp, in which cleavage of the -Tyr-|-Leu- and -Tyr-|-Trp bonds also occurs).. Its function is as follows. Cleaves peptides in various proteins in a process that requires ATP hydrolysis. Has a chymotrypsin-like activity. Plays a major role in the degradation of misfolded proteins. The polypeptide is ATP-dependent Clp protease proteolytic subunit (Afipia carboxidovorans (strain ATCC 49405 / DSM 1227 / KCTC 32145 / OM5) (Oligotropha carboxidovorans)).